The sequence spans 206 residues: Small ribosomal subunit protein uS4 (206 aa).

The 61-residue stretch at 96–156 (CRLDNVVYRM…EKSLNQLRIV (61 aa)) folds into the S4 RNA-binding domain.

The protein belongs to the universal ribosomal protein uS4 family. In terms of assembly, part of the 30S ribosomal subunit. Contacts protein S5. The interaction surface between S4 and S5 is involved in control of translational fidelity.

Its function is as follows. One of the primary rRNA binding proteins, it binds directly to 16S rRNA where it nucleates assembly of the body of the 30S subunit. With S5 and S12 plays an important role in translational accuracy. This is Small ribosomal subunit protein uS4 from Pseudomonas entomophila (strain L48).